We begin with the raw amino-acid sequence, 470 residues long: Methylenetetrahydrofolate--tRNA-(uracil-5-)-methyltransferase TrmFO (470 aa).

10–15 serves as a coordination point for FAD; sequence GAGLAG.

The protein belongs to the MnmG family. TrmFO subfamily. FAD serves as cofactor.

It localises to the cytoplasm. It carries out the reaction uridine(54) in tRNA + (6R)-5,10-methylene-5,6,7,8-tetrahydrofolate + NADH + H(+) = 5-methyluridine(54) in tRNA + (6S)-5,6,7,8-tetrahydrofolate + NAD(+). It catalyses the reaction uridine(54) in tRNA + (6R)-5,10-methylene-5,6,7,8-tetrahydrofolate + NADPH + H(+) = 5-methyluridine(54) in tRNA + (6S)-5,6,7,8-tetrahydrofolate + NADP(+). Its function is as follows. Catalyzes the folate-dependent formation of 5-methyl-uridine at position 54 (M-5-U54) in all tRNAs. The polypeptide is Methylenetetrahydrofolate--tRNA-(uracil-5-)-methyltransferase TrmFO (Prochlorococcus marinus subsp. pastoris (strain CCMP1986 / NIES-2087 / MED4)).